The primary structure comprises 562 residues: Potassium voltage-gated channel subfamily V member 2 (562 aa).

Over residues Met-1 to Trp-10 the composition is skewed to basic and acidic residues. Positions Met-1–Arg-34 are disordered. The Cytoplasmic segment spans residues Met-1–Pro-163. Residues Ala-164–Leu-184 form a helical membrane-spanning segment. Residues Cys-185 to Ala-269 lie on the Extracellular side of the membrane. The chain crosses the membrane as a helical span at residues Met-270–Val-290. Residues Glu-291–Asn-344 lie on the Cytoplasmic side of the membrane. The chain crosses the membrane as a helical span at residues Leu-345–Ser-365. The Extracellular portion of the chain corresponds to Glu-366 to Gln-391. The helical; Voltage-sensor transmembrane segment at Val-392 to Thr-412 threads the bilayer. Residues Gly-413 to Gln-427 are Cytoplasmic-facing. Residues Val-428–Ser-448 traverse the membrane as a helical segment. The Extracellular segment spans residues Val-449–Ile-461. Asn-457 is a glycosylation site (N-linked (GlcNAc...) asparagine). Positions Leu-462 to Pro-482 form an intramembrane region, pore-forming. Positions Thr-474–Asp-479 match the Selectivity filter motif. Residues Glu-483 to Arg-488 are Extracellular-facing. Residues Leu-489 to Leu-509 form a helical membrane-spanning segment. Residues Tyr-510–Asn-562 are Cytoplasmic-facing.

Belongs to the potassium channel family. V (TC 1.A.1.2) subfamily. Kv8.2/KCNV2 sub-subfamily. Heteromultimer with KCNB1, KCNC1 and KCNF1. Does not form homomultimers.

The protein localises to the cell membrane. Its function is as follows. Potassium channel subunit. Modulates channel activity by shifting the threshold and the half-maximal activation to more negative values. This is Potassium voltage-gated channel subfamily V member 2 (Kcnv2) from Mus musculus (Mouse).